The chain runs to 779 residues: Angiomotin-like protein 2 (779 aa).

2 disordered regions span residues Gly-41 to His-215 and Gln-263 to Ser-308. Composition is skewed to basic and acidic residues over residues Lys-100–Ala-112 and Arg-141–His-152. The tract at residues Gly-101–Gly-307 is required for interaction with CDH5. A Phosphotyrosine; by FGFR1 modification is found at Tyr-107. The span at Glu-160–Arg-169 shows a compositional bias: low complexity. Polar residues predominate over residues His-177 to Gly-193. The span at Leu-196–Tyr-213 shows a compositional bias: pro residues. The segment at His-220–Gly-307 is required for interaction with CDH1. Positions Ser-298 to Ser-308 are enriched in low complexity. A coiled-coil region spans residues Ser-308–Gln-581. Residues Lys-347 and Lys-408 each participate in a glycyl lysine isopeptide (Lys-Gly) (interchain with G-Cter in ubiquitin) cross-link. 2 disordered regions span residues Arg-522–Leu-543 and Thr-679–Ser-753. The segment covering Ala-530–Gly-539 has biased composition (gly residues). 2 stretches are compositionally biased toward polar residues: residues Gln-680–Arg-690 and Asp-725–Cys-740. Phosphoserine is present on residues Ser-759 and Ser-762. The PDZ-binding signature appears at Glu-776–Ile-779.

Belongs to the angiomotin family. As to quaternary structure, part of a complex composed of AMOTL2, MAGI1 and CDH5, within the complex AMOTL2 acts as a scaffold protein for the interaction of MAGI1 with CDH5. The complex is required for coupling actin fibers to cell junctions in endothelial cells. Within the complex AMOTL2 (via its N-terminus) interacts with CDH5. Interacts (via N-terminus) with MAGI1. Interacts (via N-terminus) with ACTB; the interaction facilitates binding of cell junction complexes to actin fibers in endothelial cells. Interacts with CDH1; the interaction may facilitate binding of radial actin fibers to cell junction complexes. Interacts with SRC. Interacts with YAP1; the interaction is required for ubiquitination of AMOTL2 and localization of YAP1 to tight junctions. Interacts with WWP1; the interaction facilitates WWP1 interaction with the Crumbs complex and subsequent WWP1 translocation to the plasma membrane. WWP1 interaction with the Crumbs complex promotes WWP1 monoubiquitination of AMOTL2 which subsequently activates the Hippo signaling pathway. When ubiquitinated interacts with LATS2 (via UBA domain); the interaction promotes LATS2 phosphorylation of YAP1. Interacts (via PPXY motif) with WWTR1/TAZ (via WW domain); the interaction promotes WWTR1/TAZ localization to the cytoplasm and thereby inhibition of its transcriptional properties. Interacts with PHLDB2; interaction may facilitate PHLDB2 localization to the myotube podosome cortex that surrounds the core. Post-translationally, monoubiquitinated at Lys-347 and Lys-408 by Crumbs complex-bound WWP1. De-ubiquitinated at Lys-347 and Lys-408 by USP9X; the interaction may be promoted by cell contact inhibition. Deubiquitination of AMOTL2 negatively regulates Hippo signaling activation. In terms of processing, phosphorylation at Tyr-107 is necessary for efficient binding to SRC and synergistically functioning with SRC to activate the downstream MAPK pathway.

The protein localises to the recycling endosome. It is found in the cytoplasm. It localises to the cell projection. The protein resides in the podosome. Its subcellular location is the cell junction. In terms of biological role, regulates the translocation of phosphorylated SRC to peripheral cell-matrix adhesion sites. Required for proper architecture of actin filaments. Plays a role in coupling actin fibers to cell junctions in endothelial cells and is therefore required for correct endothelial cell morphology via facilitating transcellular transmission of mechanical force resulting in endothelial cell elongation. Required for the anchoring of radial actin fibers to CDH1 junction complexes at the cell membrane which facilitates organization of radial actin fiber structure and cellular response to contractile forces. This contributes to maintenance of cell area, size, shape, epithelial sheet organization and trophectoderm cell properties that facilitate blastocyst zona hatching. Inhibits the Wnt/beta-catenin signaling pathway, probably by recruiting CTNNB1 to recycling endosomes and hence preventing its translocation to the nucleus. Participates in angiogenesis. Activates the Hippo signaling pathway in response to cell contact inhibition via interaction with and ubiquitination by Crumbs complex-bound WWP1. Ubiquitinated AMOTL2 then interacts with LATS2 which in turn phosphorylates YAP1, excluding it from the nucleus and localizing it to the cytoplasm and tight junctions, therefore ultimately repressing YAP1-driven transcription of target genes. Acts to inhibit WWTR1/TAZ transcriptional coactivator activity via sequestering WWTR1/TAZ in the cytoplasm and at tight junctions. Regulates the size and protein composition of the podosome cortex and core at myofibril neuromuscular junctions. Selectively promotes FGF-induced MAPK activation through SRC. May play a role in the polarity, proliferation and migration of endothelial cells. This chain is Angiomotin-like protein 2, found in Homo sapiens (Human).